Here is a 298-residue protein sequence, read N- to C-terminus: MNKDNVKLAIAPIGWTNDDMPDLGKENTFQQCVSEMALAGFTGSEVGSKYPRDPAVLKPMLDIRGIQICNAWFSTFFADGLKEKTIDEFINHMNFLHAMGAKVIGCSEQSKSIQGTTKGVFEEKPYFSDEEWQRVADGYNELADIAKGKGMQVCLHHHMGTGIQTTAEIDRYMSMVNDDVYLLFDTGHAYYSEGSQQAMMAILEKYLPRINHVHLKDVRDEVVAEVKANKLSFLDGVKKGTFTVPGDGVIDFRPVFKLLDERGYKGWMVVEAEQDPALANPFEYAVKARRYIKETAGI.

Belongs to the IolE/MocC family. Glutathione is required as a cofactor. Co(2+) serves as cofactor. The cofactor is Mn(2+).

It catalyses the reaction scyllo-inosose = 3D-3,5/4-trihydroxycyclohexane-1,2-dione + H2O. Its function is as follows. Catalyzes the dehydration of inosose (2-keto-myo-inositol, 2KMI or 2,4,6/3,5-pentahydroxycyclohexanone) to 3D-(3,5/4)-trihydroxycyclohexane-1,2-dione (D-2,3-diketo-4-deoxy-epi-inositol). The chain is Inosose dehydratase from Serratia proteamaculans (strain 568).